A 352-amino-acid chain; its full sequence is Phosphoribosylformylglycinamidine cyclo-ligase (352 aa).

Belongs to the AIR synthase family.

It localises to the cytoplasm. The enzyme catalyses 2-formamido-N(1)-(5-O-phospho-beta-D-ribosyl)acetamidine + ATP = 5-amino-1-(5-phospho-beta-D-ribosyl)imidazole + ADP + phosphate + H(+). It participates in purine metabolism; IMP biosynthesis via de novo pathway; 5-amino-1-(5-phospho-D-ribosyl)imidazole from N(2)-formyl-N(1)-(5-phospho-D-ribosyl)glycinamide: step 2/2. The sequence is that of Phosphoribosylformylglycinamidine cyclo-ligase from Azoarcus sp. (strain BH72).